Reading from the N-terminus, the 450-residue chain is Flavin-containing monooxygenase FMO GS-OX-like 3 (450 aa).

17 to 22 (GAGPAG) lines the FAD pocket. 215-220 (GNSSSA) contacts NADP(+).

The protein belongs to the FMO family. It depends on FAD as a cofactor.

In terms of biological role, catalyzes the conversion of methylthioalkyl glucosinolates of any chain length into methylsulfinylalkyl glucosinolates. The chain is Flavin-containing monooxygenase FMO GS-OX-like 3 from Arabidopsis thaliana (Mouse-ear cress).